A 391-amino-acid polypeptide reads, in one-letter code: Na(+)/H(+) antiporter NhaA 1 (391 aa).

Transmembrane regions (helical) follow at residues 19–39 (FLAS…AALI), 56–76 (VWLG…IFFL), 98–118 (ALPG…YIAI), 128–148 (GWAI…SLLG), 157–177 (VFLA…IAFF), 180–200 (SGLN…LIAL), 208–228 (LLPY…SGVH), 264–284 (VAFA…LSGI), 297–317 (VALG…VLAI), 335–355 (GVAI…NLAF), and 364–384 (EVKV…ILLL).

This sequence belongs to the NhaA Na(+)/H(+) (TC 2.A.33) antiporter family.

The protein resides in the cell inner membrane. The enzyme catalyses Na(+)(in) + 2 H(+)(out) = Na(+)(out) + 2 H(+)(in). Functionally, na(+)/H(+) antiporter that extrudes sodium in exchange for external protons. This chain is Na(+)/H(+) antiporter NhaA 1, found in Pseudomonas savastanoi pv. phaseolicola (strain 1448A / Race 6) (Pseudomonas syringae pv. phaseolicola (strain 1448A / Race 6)).